Reading from the N-terminus, the 194-residue chain is Probable nicotinate-nucleotide adenylyltransferase (194 aa).

The protein belongs to the NadD family.

The catalysed reaction is nicotinate beta-D-ribonucleotide + ATP + H(+) = deamido-NAD(+) + diphosphate. Its pathway is cofactor biosynthesis; NAD(+) biosynthesis; deamido-NAD(+) from nicotinate D-ribonucleotide: step 1/1. Catalyzes the reversible adenylation of nicotinate mononucleotide (NaMN) to nicotinic acid adenine dinucleotide (NaAD). This Brucella suis biovar 1 (strain 1330) protein is Probable nicotinate-nucleotide adenylyltransferase.